Consider the following 148-residue polypeptide: uncharacterized protein (148 aa).

Positions 1 to 17 are enriched in low complexity; sequence MCPPVRQRPAQAPPAKR. 2 disordered regions span residues 1-86 and 122-148; these read MCPP…VQSP and RAHR…TSPC. Residues 38–57 are compositionally biased toward basic residues; sequence RPPKMQRRPRPPVAKRRRFP. The span at 137-148 shows a compositional bias: polar residues; the sequence is QRPSPDSQTSPC.

Belongs to the Epstein-Barr virus BLLF2 family.

This is an uncharacterized protein from Epstein-Barr virus (strain AG876) (HHV-4).